A 368-amino-acid polypeptide reads, in one-letter code: tRNA-specific 2-thiouridylase MnmA (368 aa).

Residues 12-19 (AMSGGVDS) and Met-38 each bind ATP. Cys-110 functions as the Nucleophile in the catalytic mechanism. Cys-110 and Cys-207 are disulfide-bonded. Gly-134 contributes to the ATP binding site. The interaction with tRNA stretch occupies residues 157–159 (KDQ). The Cysteine persulfide intermediate role is filled by Cys-207. The interaction with tRNA stretch occupies residues 312–313 (RY).

It belongs to the MnmA/TRMU family.

The protein resides in the cytoplasm. The catalysed reaction is S-sulfanyl-L-cysteinyl-[protein] + uridine(34) in tRNA + AH2 + ATP = 2-thiouridine(34) in tRNA + L-cysteinyl-[protein] + A + AMP + diphosphate + H(+). Functionally, catalyzes the 2-thiolation of uridine at the wobble position (U34) of tRNA, leading to the formation of s(2)U34. The chain is tRNA-specific 2-thiouridylase MnmA from Geobacter metallireducens (strain ATCC 53774 / DSM 7210 / GS-15).